The following is a 338-amino-acid chain: Tryptophan--tRNA ligase (338 aa).

Residues 11 to 13 (QPS) and 19 to 20 (GN) each bind ATP. Residues 12 to 20 (PSGELSIGN) carry the 'HIGH' region motif. Asp135 contributes to the L-tryptophan binding site. Residues 147–149 (GSD), Val189, and 198–202 (KMSKS) contribute to the ATP site. Positions 198–202 (KMSKS) match the 'KMSKS' region motif.

Belongs to the class-I aminoacyl-tRNA synthetase family. As to quaternary structure, homodimer.

The protein localises to the cytoplasm. The enzyme catalyses tRNA(Trp) + L-tryptophan + ATP = L-tryptophyl-tRNA(Trp) + AMP + diphosphate + H(+). Catalyzes the attachment of tryptophan to tRNA(Trp). The polypeptide is Tryptophan--tRNA ligase (Vibrio vulnificus (strain YJ016)).